A 280-amino-acid polypeptide reads, in one-letter code: Late embryogenesis abundant protein 76 (280 aa).

Disordered stretches follow at residues methionine 1–valine 156 and glutamate 220–threonine 241. Residues methionine 28–threonine 39 show a composition bias toward basic and acidic residues. LEA 11-mer repeat repeat units follow at residues lysine 31–glutamine 41, threonine 53–glutamine 63, threonine 75–glutamine 85, threonine 97–glutamine 107, and threonine 119–glutamine 129. The span at serine 40–glutamine 114 shows a compositional bias: low complexity. 2 stretches are compositionally biased toward basic and acidic residues: residues lysine 115 to threonine 127 and glutamate 136 to threonine 145. Over residues threonine 230–aspartate 239 the composition is skewed to low complexity.

Belongs to the LEA type 4 family.

In terms of biological role, lea proteins are late embryonic proteins abundant in higher plant seed embryos. This Brassica napus (Rape) protein is Late embryogenesis abundant protein 76.